The sequence spans 1415 residues: G8 domain-containing protein DDB_G0278975 (1415 aa).

The signal sequence occupies residues 1-24; that stretch reads MKINKIILFFFLSCLYLFSSSVSA. The next 2 helical transmembrane spans lie at 107 to 127 and 138 to 158; these read INLN…GLFT and LLFI…SIKI. 5 N-linked (GlcNAc...) asparagine glycosylation sites follow: asparagine 245, asparagine 366, asparagine 428, asparagine 466, and asparagine 579. The G8 domain maps to 566 to 692; that stretch reads STWPNGIIPS…YHNTWSKLSA (127 aa). PbH1 repeat units follow at residues 819-841 and 842-864; these read LKNS…TIHG and TNNV…YLED. N-linked (GlcNAc...) asparagine glycosylation is found at asparagine 844, asparagine 985, asparagine 1009, asparagine 1023, asparagine 1099, asparagine 1244, and asparagine 1342.

Belongs to the comF family.

The protein localises to the membrane. This Dictyostelium discoideum (Social amoeba) protein is G8 domain-containing protein DDB_G0278975.